Consider the following 285-residue polypeptide: MEIIIISGRSGAGKSVALRALEDTGYYCVDNIPLDLLPQLTDILSQSQSSVAISLDIRNIPSSANSLEQTLSTLQKHHQIKIIFLEADRATLIRRYSDSRRLHPLSLKDLSLEAAIDEEYRYLEPLIQHANLILDTTHLSTHILAERLREFLRDNSEKELKIIVESFGFKYGIPLDADYVFDVRFLPNPHWDPTLRPMTGLEAPVAEFLNSHTEVNEFIYLTRHYIDTWLPMLEKNNRSYLTIAIGCTGGKHRSVYIAQQLGEYFQAKGKTVQIQHKSLERNKKI.

8 to 15 (GRSGAGKS) lines the ATP pocket. Position 56–59 (56–59 (DIRN)) interacts with GTP.

Belongs to the RapZ-like family.

In terms of biological role, displays ATPase and GTPase activities. In Haemophilus influenzae (strain 86-028NP), this protein is Nucleotide-binding protein NTHI1314.